Consider the following 271-residue polypeptide: MRAYLELARPINCAMAALGVVVGELIAGARLDVGAVLAPVVAAVVCAGGNAINDYFDAEVDAVNRPDRPIPSGRVSPRSARMFALGCFAVGVGMATVINRMCLAIAALNSVLLYLYSWRLKGTPLIGNVMVSYLVGSCFLFGAAVGQRPAPAVWLFLLAFLANLVREILKDLEDVEGDAALGLKTLPIAYGEGVALRVATVFAIALAVLTPLPYLDGVVGWPYLVLALPAAAVILLASVLAVAGSWDAGKAQRVVKVGMLLGLLAFLASLL.

8 consecutive transmembrane segments (helical) span residues 11–31 (INCA…GARL), 33–53 (VGAV…NAIN), 88–108 (FAVG…IAAL), 125–145 (LIGN…GAAV), 149–169 (PAPA…REIL), 201–221 (VFAI…VVGW), 224–244 (LVLA…AVAG), and 251–271 (AQRV…ASLL).

Belongs to the UbiA prenyltransferase family. DGGGP synthase subfamily. Mg(2+) is required as a cofactor.

It localises to the cell membrane. The catalysed reaction is sn-3-O-(geranylgeranyl)glycerol 1-phosphate + (2E,6E,10E)-geranylgeranyl diphosphate = 2,3-bis-O-(geranylgeranyl)-sn-glycerol 1-phosphate + diphosphate. The protein operates within membrane lipid metabolism; glycerophospholipid metabolism. Functionally, prenyltransferase that catalyzes the transfer of the geranylgeranyl moiety of geranylgeranyl diphosphate (GGPP) to the C2 hydroxyl of (S)-3-O-geranylgeranylglyceryl phosphate (GGGP). This reaction is the second ether-bond-formation step in the biosynthesis of archaeal membrane lipids. This chain is Digeranylgeranylglyceryl phosphate synthase, found in Methanopyrus kandleri (strain AV19 / DSM 6324 / JCM 9639 / NBRC 100938).